The sequence spans 182 residues: MLISHSDLNQQLKSAGIGFNATELHGFLSGLLCGGLKDQSWLPLLYQFSNDNHAYPTGLVQPVTELYEQISQTLSDVEGFTFELGLTEDENVFTQADSLSDWANQFLLGIGLAQPELAKEKGEIGEAVDDLQDICQLGYDEDDNEEELAEALEEIIEYVRTIAMLFYSHFNEGEIESKPVLH.

Belongs to the UPF0149 family.

In Haemophilus influenzae (strain ATCC 51907 / DSM 11121 / KW20 / Rd), this protein is UPF0149 protein HI_0817.